The primary structure comprises 650 residues: Protein kinase domain-containing protein ppk38 (650 aa).

One can recognise a Protein kinase domain in the interval 33–315 (VTVKRYLAEG…MRNVPIHIYD (283 aa)). 3 disordered regions span residues 344–442 (IHQS…PTTP), 517–571 (KVAA…PTNM), and 591–616 (RRVS…EKPM). Polar residues-rich tracts occupy residues 369 to 415 (NVNS…NFRV) and 533 to 554 (SVEN…SSNA).

The sequence is that of Protein kinase domain-containing protein ppk38 (ppk38) from Schizosaccharomyces pombe (strain 972 / ATCC 24843) (Fission yeast).